Consider the following 450-residue polypeptide: Glutamate--tRNA ligase 2 (450 aa).

The short motif at 10–20 (PSPTGFLHIGG) is the 'HIGH' region element. A 'KMSKS' region motif is present at residues 232 to 236 (KLSKR). Position 235 (K235) interacts with ATP.

The protein belongs to the class-I aminoacyl-tRNA synthetase family. Glutamate--tRNA ligase type 1 subfamily. As to quaternary structure, monomer.

It is found in the cytoplasm. The catalysed reaction is tRNA(Glu) + L-glutamate + ATP = L-glutamyl-tRNA(Glu) + AMP + diphosphate. Its function is as follows. Catalyzes the attachment of glutamate to tRNA(Glu) in a two-step reaction: glutamate is first activated by ATP to form Glu-AMP and then transferred to the acceptor end of tRNA(Glu). This Wolbachia pipientis subsp. Culex pipiens (strain wPip) protein is Glutamate--tRNA ligase 2.